Consider the following 504-residue polypeptide: Anaerobic nitric oxide reductase transcription regulator NorR (504 aa).

Asp57 carries the post-translational modification 4-aspartylphosphate. One can recognise a Sigma-54 factor interaction domain in the interval 187–416 (MIGLSPGMTQ…LEHAIHRAVV (230 aa)). Residues 215–222 (GETGTGKE) and 278–287 (ADNGTLFLDE) contribute to the ATP site. A DNA-binding region (H-T-H motif) is located at residues 479 to 498 (WAASARMLETDVANLHRLAK).

Its pathway is nitrogen metabolism; nitric oxide reduction. Functionally, required for the expression of anaerobic nitric oxide (NO) reductase, acts as a transcriptional activator for at least the norVW operon. Activation also requires sigma-54. This Escherichia fergusonii (strain ATCC 35469 / DSM 13698 / CCUG 18766 / IAM 14443 / JCM 21226 / LMG 7866 / NBRC 102419 / NCTC 12128 / CDC 0568-73) protein is Anaerobic nitric oxide reductase transcription regulator NorR.